Reading from the N-terminus, the 469-residue chain is Diaminobutyrate--2-oxoglutarate transaminase (469 aa).

An N6-(pyridoxal phosphate)lysine modification is found at lysine 290.

This sequence belongs to the class-III pyridoxal-phosphate-dependent aminotransferase family. Pyridoxal 5'-phosphate serves as cofactor.

The protein localises to the cytoplasm. The enzyme catalyses L-2,4-diaminobutanoate + 2-oxoglutarate = L-aspartate 4-semialdehyde + L-glutamate. Involved in the degradation of ectoine, which allows H.elongata to utilize ectoine as both a carbon and a nitrogen source for growth. Probably catalyzes the conversion of L-2,4-diaminobutyrate (DABA) to L-aspartate beta-semialdehyde (ASA) by transamination with 2-oxoglutarate. The chain is Diaminobutyrate--2-oxoglutarate transaminase from Halomonas elongata (strain ATCC 33173 / DSM 2581 / NBRC 15536 / NCIMB 2198 / 1H9).